Consider the following 193-residue polypeptide: Putative manganese efflux pump MntP (193 aa).

A run of 6 helical transmembrane segments spans residues 8-28 (LLAI…GIIL), 37-57 (LVMA…GWMF), 61-81 (FSHL…AFLG), 109-129 (MAIA…LLGI), 138-158 (PILI…YFGI), and 172-192 (LWGG…HLFL).

The protein belongs to the MntP (TC 9.B.29) family.

Its subcellular location is the cell inner membrane. Probably functions as a manganese efflux pump. The chain is Putative manganese efflux pump MntP from Bacteroides thetaiotaomicron (strain ATCC 29148 / DSM 2079 / JCM 5827 / CCUG 10774 / NCTC 10582 / VPI-5482 / E50).